The chain runs to 179 residues: NAD(P)H-quinone oxidoreductase subunit I, chloroplastic (179 aa).

4Fe-4S ferredoxin-type domains follow at residues 55-84 (GRIH…VDWR) and 95-124 (LNYS…MTEE). Residues cysteine 64, cysteine 67, cysteine 70, cysteine 74, cysteine 104, cysteine 107, cysteine 110, and cysteine 114 each contribute to the [4Fe-4S] cluster site.

It belongs to the complex I 23 kDa subunit family. In terms of assembly, NDH is composed of at least 16 different subunits, 5 of which are encoded in the nucleus. It depends on [4Fe-4S] cluster as a cofactor.

The protein resides in the plastid. It localises to the chloroplast thylakoid membrane. It carries out the reaction a plastoquinone + NADH + (n+1) H(+)(in) = a plastoquinol + NAD(+) + n H(+)(out). It catalyses the reaction a plastoquinone + NADPH + (n+1) H(+)(in) = a plastoquinol + NADP(+) + n H(+)(out). Functionally, NDH shuttles electrons from NAD(P)H:plastoquinone, via FMN and iron-sulfur (Fe-S) centers, to quinones in the photosynthetic chain and possibly in a chloroplast respiratory chain. The immediate electron acceptor for the enzyme in this species is believed to be plastoquinone. Couples the redox reaction to proton translocation, and thus conserves the redox energy in a proton gradient. In Nuphar advena (Common spatterdock), this protein is NAD(P)H-quinone oxidoreductase subunit I, chloroplastic.